An 86-amino-acid chain; its full sequence is Large ribosomal subunit protein bL31B (86 aa).

Belongs to the bacterial ribosomal protein bL31 family. Type B subfamily. In terms of assembly, part of the 50S ribosomal subunit.

In Streptococcus uberis (strain ATCC BAA-854 / 0140J), this protein is Large ribosomal subunit protein bL31B.